The primary structure comprises 114 residues: Histone H3-3 (114 aa).

Residues Asn1–Lys17 show a composition bias toward basic residues. The interval Asn1–His32 is disordered. Residues Lys18 to Val28 show a composition bias toward low complexity.

It belongs to the histone H3 family. In terms of assembly, the nucleosome is a histone octamer containing two molecules each of H2A, H2B, H3 and H4 assembled in one H3-H4 heterotetramer and two H2A-H2B heterodimers. The octamer wraps approximately 147 bp of DNA.

The protein resides in the nucleus. Its subcellular location is the chromosome. Core component of nucleosome. Nucleosomes wrap and compact DNA into chromatin, limiting DNA accessibility to the cellular machineries which require DNA as a template. Histones thereby play a central role in transcription regulation, DNA repair, DNA replication and chromosomal stability. DNA accessibility is regulated via a complex set of post-translational modifications of histones, also called histone code, and nucleosome remodeling. The chain is Histone H3-3 (H3-3) from Stylonychia lemnae (Ciliate).